The following is an 868-amino-acid chain: Paladin (868 aa).

A lipid anchor (N-myristoyl glycine) is attached at Gly-2.

It belongs to the paladin family.

It localises to the cytoplasm. The protein resides in the cytosol. The polypeptide is Paladin (PALD1) (Gallus gallus (Chicken)).